Consider the following 478-residue polypeptide: Aspartyl/glutamyl-tRNA(Asn/Gln) amidotransferase subunit B (478 aa).

The protein belongs to the GatB/GatE family. GatB subfamily. In terms of assembly, heterotrimer of A, B and C subunits.

The enzyme catalyses L-glutamyl-tRNA(Gln) + L-glutamine + ATP + H2O = L-glutaminyl-tRNA(Gln) + L-glutamate + ADP + phosphate + H(+). It carries out the reaction L-aspartyl-tRNA(Asn) + L-glutamine + ATP + H2O = L-asparaginyl-tRNA(Asn) + L-glutamate + ADP + phosphate + 2 H(+). Its function is as follows. Allows the formation of correctly charged Asn-tRNA(Asn) or Gln-tRNA(Gln) through the transamidation of misacylated Asp-tRNA(Asn) or Glu-tRNA(Gln) in organisms which lack either or both of asparaginyl-tRNA or glutaminyl-tRNA synthetases. The reaction takes place in the presence of glutamine and ATP through an activated phospho-Asp-tRNA(Asn) or phospho-Glu-tRNA(Gln). The protein is Aspartyl/glutamyl-tRNA(Asn/Gln) amidotransferase subunit B of Alkalilimnicola ehrlichii (strain ATCC BAA-1101 / DSM 17681 / MLHE-1).